The chain runs to 547 residues: MESELYECDVLIIGSGGAGCRAAIEVSEHKLTPIIVSKGLSFKSGCTGMAEGGYNAAFACVDPEDSPDVHFEDTMRGGGFINDPRLVRILVDEAPDRLRDLEEYGALFDRQESGLLDQRPFGGQTYRRTCYHGDRTGHEMITALKEEVIRRDIETIDEVMITSLLVEDGSVLGAMGVSIMNSEPVAFRASSTILASGGAGHIYPVTSNTMQKGGDGFAIAWKAGADLIDMEQVQFHPTGMVYPESRRGVLVTEAVRGEGGILLNSEGERFMGRYDPRGELATRDVVARAIYTEIMEGRGTENGGVYLDVSHLPDEVIEEKLETMLLQFLDVGVDIRSEPMEVAPTAHHFMGGVRIDEWGRTNLKNLFAAGEVSGGVHGANRLGGNALADTQVFGRRAGISAAKNAMSSSRRHVRSLIEEEEQRIKDMVRDGSIRPAEIRDELHEAMWSDVAIVRSRRSLESAMSRISTLMDKLGDLDVPETGGFNSNLLEALELENMLITASLVTRSALIREESRGSHYREDFPETRPEWKRSILLNRKMEPQFIGR.

Belongs to the FAD-dependent oxidoreductase 2 family. As to quaternary structure, subunit A of the heterodimeric fumarate reductase of methanogenic Archaea, composed of subunits A (TfrA) and B (TfrB). The cofactor is an oxidized flavin.

It is found in the cytoplasm. The catalysed reaction is coenzyme B + coenzyme M + fumarate = coenzyme M-coenzyme B heterodisulfide + succinate. Catalyzes the reduction of fumarate with reduced coenzyme M (CoM-S-H) and coenzyme B (CoB-S-H). In vitro, is able to reduces fumarate with reduced benzyl viologen, oxidize CoM-S-H and CoB-S-H to CoM-S-S-CoB with methylene blue, and reduce CoM-S-S-CoB with reduced benzyl viologen. The enzyme has specificity for the two thiol compounds as the CoB--CoM heterodisulfide reductase. The enzyme is very sensitive to oxygen. The protein is Fumarate reductase (CoM/CoB) subunit A of Methanothermobacter marburgensis (strain ATCC BAA-927 / DSM 2133 / JCM 14651 / NBRC 100331 / OCM 82 / Marburg) (Methanobacterium thermoautotrophicum).